The primary structure comprises 312 residues: Golgi to ER traffic protein 2 (312 aa).

Topologically, residues 1-175 (MSDSPSISAE…VQYNTYRHQV (175 aa)) are cytoplasmic. A helical transmembrane segment spans residues 176–196 (WKFRFLAVRYFALLANFIYHF). Over 197–224 (YIIGDSISFASSSHQFIRELIPVEPARS) the chain is Lumenal. Residues 225–244 (FFTLFSTIEVVIIASYYFLG) form a helical membrane-spanning segment. The Cytoplasmic portion of the chain corresponds to 245–288 (TKEGFFSTATSNNFVVKLLDMGSMVLPQLQQFKTIAVRLLGYYE). Residues 289 to 309 (LLAVLLGDLSLVVVLFGLHSV) traverse the membrane as a helical segment. Over 310-312 (LGN) the chain is Lumenal.

It belongs to the GET2 family. Component of the Golgi to ER traffic (GET) complex, which is composed of GET1, GET2 and GET3. Within the complex, GET1 and GET2 form a heterotetramer which is stabilized by phosphatidylinositol binding and which binds to the GET3 homodimer.

It localises to the endoplasmic reticulum membrane. The protein localises to the golgi apparatus membrane. In terms of biological role, required for the post-translational delivery of tail-anchored (TA) proteins to the endoplasmic reticulum. Together with GET1, acts as a membrane receptor for soluble GET3, which recognizes and selectively binds the transmembrane domain of TA proteins in the cytosol. The GET complex cooperates with the HDEL receptor ERD2 to mediate the ATP-dependent retrieval of resident ER proteins that contain a C-terminal H-D-E-L retention signal from the Golgi to the ER. This chain is Golgi to ER traffic protein 2, found in Scheffersomyces stipitis (strain ATCC 58785 / CBS 6054 / NBRC 10063 / NRRL Y-11545) (Yeast).